We begin with the raw amino-acid sequence, 224 residues long: MKKAVVLLSGGMDSAAVIALAQEQGFAVYALSVRYGQRHTSELDAAARVAAAQGVVAHKVVDVDLRSIGGSALTDDIDVPDAGGDGIPVTYVPARNTIMLSLALGWAEVVGANDLFCGVNAVDYSGYPDCRPEFVRAFEVLANLATKAGVEGAGLRVHAPLQFLSKADIVREGVRLGVDFGLTVSCYRADADGRACGHCDACRLRAAGFADAGVPDPTHYAILS.

8-18 serves as a coordination point for ATP; that stretch reads LSGGMDSAAVI. Positions 186, 196, 199, and 202 each coordinate Zn(2+).

It belongs to the QueC family. Zn(2+) serves as cofactor.

The catalysed reaction is 7-carboxy-7-deazaguanine + NH4(+) + ATP = 7-cyano-7-deazaguanine + ADP + phosphate + H2O + H(+). It participates in purine metabolism; 7-cyano-7-deazaguanine biosynthesis. Catalyzes the ATP-dependent conversion of 7-carboxy-7-deazaguanine (CDG) to 7-cyano-7-deazaguanine (preQ(0)). This Xanthomonas oryzae pv. oryzae (strain MAFF 311018) protein is 7-cyano-7-deazaguanine synthase.